The following is a 514-amino-acid chain: Chromosomal replication initiator protein DnaA (514 aa).

Residues 1–90 (MSVELWQQCV…KRSRTPRAAI (90 aa)) are domain I, interacts with DnaA modulators. Residues 91 to 177 (VPSQTHVAPP…QVEGALKHTS (87 aa)) form a domain II region. A domain III, AAA+ region region spans residues 178–394 (YLNRTFTFEN…GALKRVIAHS (217 aa)). 4 residues coordinate ATP: Gly-222, Gly-224, Lys-225, and Thr-226. Residues 395-514 (HFMGRPITIE…YKNLLRTLTT (120 aa)) form a domain IV, binds dsDNA region.

Belongs to the DnaA family. As to quaternary structure, oligomerizes as a right-handed, spiral filament on DNA at oriC.

Its subcellular location is the cytoplasm. Its function is as follows. Plays an essential role in the initiation and regulation of chromosomal replication. ATP-DnaA binds to the origin of replication (oriC) to initiate formation of the DNA replication initiation complex once per cell cycle. Binds the DnaA box (a 9 base pair repeat at the origin) and separates the double-stranded (ds)DNA. Forms a right-handed helical filament on oriC DNA; dsDNA binds to the exterior of the filament while single-stranded (ss)DNA is stabiized in the filament's interior. The ATP-DnaA-oriC complex binds and stabilizes one strand of the AT-rich DNA unwinding element (DUE), permitting loading of DNA polymerase. After initiation quickly degrades to an ADP-DnaA complex that is not apt for DNA replication. Binds acidic phospholipids. The polypeptide is Chromosomal replication initiator protein DnaA (Pseudomonas aeruginosa (strain LESB58)).